A 64-amino-acid polypeptide reads, in one-letter code: Large ribosomal subunit protein uL29 (64 aa).

It belongs to the universal ribosomal protein uL29 family.

This chain is Large ribosomal subunit protein uL29, found in Paraburkholderia phytofirmans (strain DSM 17436 / LMG 22146 / PsJN) (Burkholderia phytofirmans).